Consider the following 197-residue polypeptide: Recombination protein RecR (197 aa).

The segment at 57-72 (CSVCFGITEDDPCRFC) adopts a C4-type zinc-finger fold. The Toprim domain maps to 79 to 174 (GAICVVEEPQ…RVTRLAHGIP (96 aa)).

The protein belongs to the RecR family.

Its function is as follows. May play a role in DNA repair. It seems to be involved in an RecBC-independent recombinational process of DNA repair. It may act with RecF and RecO. This chain is Recombination protein RecR, found in Geobacter sulfurreducens (strain ATCC 51573 / DSM 12127 / PCA).